Reading from the N-terminus, the 177-residue chain is ATP synthase subunit delta (177 aa).

Belongs to the ATPase delta chain family. In terms of assembly, F-type ATPases have 2 components, F(1) - the catalytic core - and F(0) - the membrane proton channel. F(1) has five subunits: alpha(3), beta(3), gamma(1), delta(1), epsilon(1). F(0) has three main subunits: a(1), b(2) and c(10-14). The alpha and beta chains form an alternating ring which encloses part of the gamma chain. F(1) is attached to F(0) by a central stalk formed by the gamma and epsilon chains, while a peripheral stalk is formed by the delta and b chains.

It is found in the cell inner membrane. Functionally, f(1)F(0) ATP synthase produces ATP from ADP in the presence of a proton or sodium gradient. F-type ATPases consist of two structural domains, F(1) containing the extramembraneous catalytic core and F(0) containing the membrane proton channel, linked together by a central stalk and a peripheral stalk. During catalysis, ATP synthesis in the catalytic domain of F(1) is coupled via a rotary mechanism of the central stalk subunits to proton translocation. In terms of biological role, this protein is part of the stalk that links CF(0) to CF(1). It either transmits conformational changes from CF(0) to CF(1) or is implicated in proton conduction. The protein is ATP synthase subunit delta of Shigella flexneri.